The sequence spans 647 residues: Putative lipase atg15 (647 aa).

Over 1–18 (MLPSGKRKADAFSCTSAA) the chain is Cytoplasmic. Residues 19–39 (RVTAKLALSFLALSTTPLVNA) form a helical; Signal-anchor for type II membrane protein membrane-spanning segment. The Lumenal segment spans residues 40–647 (FSYEEPNAQI…EGGEGPVNDL (608 aa)). N203, N225, N283, and N307 each carry an N-linked (GlcNAc...) asparagine glycan. The Charge relay system role is filled by S323. A glycan (N-linked (GlcNAc...) asparagine) is linked at N469. The segment at 597–626 (APALPSSVLTPSATATPPEGQPDDSGKRCR) is disordered.

This sequence belongs to the AB hydrolase superfamily. Lipase family. In terms of assembly, binds to both phosphatidylinositol (PI) and phosphatidylinositol 3,5-bisphosphate (PIP2).

It is found in the endosome. It localises to the multivesicular body membrane. The protein resides in the prevacuolar compartment membrane. It catalyses the reaction a triacylglycerol + H2O = a diacylglycerol + a fatty acid + H(+). Its function is as follows. Lipase which is essential for lysis of subvacuolar cytoplasm to vacuole targeted bodies and intravacuolar autophagic bodies. Involved in the lysis of intravacuolar multivesicular body (MVB) vesicles. The intravacuolar membrane disintegration by atg15 is critical to life span extension. The polypeptide is Putative lipase atg15 (atg15) (Neurospora crassa (strain ATCC 24698 / 74-OR23-1A / CBS 708.71 / DSM 1257 / FGSC 987)).